The primary structure comprises 681 residues: UvrABC system protein B (681 aa).

Residues 30–419 (QGVRDGRHWQ…GEVVELLVRP (390 aa)) form the Helicase ATP-binding domain. Position 43-50 (43-50 (GVTGSGKT)) interacts with ATP. The Beta-hairpin motif lies at 96-119 (YYDFYQPEAYLPSLDKYIAKDLRI). Residues 435–601 (QIDNLLAEIR…SIVKSVDQIL (167 aa)) form the Helicase C-terminal domain. In terms of domain architecture, UVR spans 641–676 (YAIVEGLRLEMQEAAEHMEYEKAAYLRDEITKMEQV).

This sequence belongs to the UvrB family. As to quaternary structure, forms a heterotetramer with UvrA during the search for lesions. Interacts with UvrC in an incision complex.

It localises to the cytoplasm. Functionally, the UvrABC repair system catalyzes the recognition and processing of DNA lesions. A damage recognition complex composed of 2 UvrA and 2 UvrB subunits scans DNA for abnormalities. Upon binding of the UvrA(2)B(2) complex to a putative damaged site, the DNA wraps around one UvrB monomer. DNA wrap is dependent on ATP binding by UvrB and probably causes local melting of the DNA helix, facilitating insertion of UvrB beta-hairpin between the DNA strands. Then UvrB probes one DNA strand for the presence of a lesion. If a lesion is found the UvrA subunits dissociate and the UvrB-DNA preincision complex is formed. This complex is subsequently bound by UvrC and the second UvrB is released. If no lesion is found, the DNA wraps around the other UvrB subunit that will check the other stand for damage. This is UvrABC system protein B from Chlorobium chlorochromatii (strain CaD3).